The sequence spans 379 residues: tRNA-specific 2-thiouridylase MnmA (379 aa).

ATP-binding positions include 9-16 and Met-35; that span reads GLSGGVDS. Residues 95–97 are interaction with target base in tRNA; that stretch reads NPD. Cys-100 functions as the Nucleophile in the catalytic mechanism. The cysteines at positions 100 and 198 are disulfide-linked. Gly-124 is an ATP binding site. The tract at residues 148 to 150 is interaction with tRNA; that stretch reads KDQ. Catalysis depends on Cys-198, which acts as the Cysteine persulfide intermediate. The interval 325-326 is interaction with tRNA; that stretch reads RY.

The protein belongs to the MnmA/TRMU family.

The protein resides in the cytoplasm. The enzyme catalyses S-sulfanyl-L-cysteinyl-[protein] + uridine(34) in tRNA + AH2 + ATP = 2-thiouridine(34) in tRNA + L-cysteinyl-[protein] + A + AMP + diphosphate + H(+). Catalyzes the 2-thiolation of uridine at the wobble position (U34) of tRNA, leading to the formation of s(2)U34. The chain is tRNA-specific 2-thiouridylase MnmA from Acidovorax sp. (strain JS42).